We begin with the raw amino-acid sequence, 410 residues long: Enterobactin exporter EntS (410 aa).

The Cytoplasmic segment spans residues 1-21 (MNKQSWLLNLSLLKTHPAFRA). Residues 22-42 (VFLARFISIVSLGLLGVAVPV) traverse the membrane as a helical segment. Over 43 to 55 (QIQMMTHSTWQVG) the chain is Periplasmic. A helical transmembrane segment spans residues 56–76 (LSVTLTGGAMFVGLMVGGVLA). Residues 77-83 (DRYERKK) are Cytoplasmic-facing. The chain crosses the membrane as a helical span at residues 84–104 (VILLARGTCGIGFIGLCLNAL). At 105–109 (LPEPS) the chain is on the periplasmic side. The chain crosses the membrane as a helical span at residues 110 to 130 (LLAIYLLGLWDGFFASLGVTA). Over 131–156 (LLAATSALVGRENLMQAGAITMLTVR) the chain is Cytoplasmic. A helical membrane pass occupies residues 157-177 (LGSVISPMIGGLLLATGGVAW). Asn178 is a topological domain (periplasmic). The helical transmembrane segment at 179–199 (YGLAAAGTFITLLPLLSLPEL) threads the bilayer. The Cytoplasmic portion of the chain corresponds to 200-218 (PPPPQPLEHPLKSLLAGFR). A helical transmembrane segment spans residues 219-233 (FLLASPLLGGLLTMA). The Periplasmic portion of the chain corresponds to 234 to 250 (SAVLVLYPALADNWQMS). A helical membrane pass occupies residues 251 to 271 (AAQIGFLYAAIPLGAAIGALT). Over 272-281 (SGKLAHSARP) the chain is Cytoplasmic. The helical transmembrane segment at 282–301 (GLLMLLSTLGSFLAIGLFGL) threads the bilayer. Residues 302–307 (MPMWIL) lie on the Periplasmic side of the membrane. Residues 308–330 (GVVCLALFGWLSAVSSLLQYTML) traverse the membrane as a helical segment. Over 331–350 (QTQTPEAMLGRINGLWTAQN) the chain is Cytoplasmic. Residues 351-371 (VTGDAIGAALLGGLGAMMTPV) traverse the membrane as a helical segment. A topological domain (periplasmic) is located at residue Ala372. The chain crosses the membrane as a helical span at residues 373–393 (SASASGFGLLIIGVLLLLVLV). The Cytoplasmic segment spans residues 394 to 410 (ELRRFRQTPPQVTASDS).

It belongs to the major facilitator superfamily. EntS (TC 2.A.1.38) family.

It localises to the cell inner membrane. Component of an export pathway for enterobactin. The chain is Enterobactin exporter EntS from Shigella flexneri.